A 487-amino-acid chain; its full sequence is Sodium-coupled neutral amino acid symporter 1 (487 aa).

Over 1–74 (MMHFKSGLEL…EYIPGTTSLG (74 aa)) the chain is Cytoplasmic. A Phosphoserine modification is found at serine 6. The residue at position 11 (threonine 11) is a Phosphothreonine. Phosphoserine is present on residues serine 25, serine 28, serine 49, and serine 52. Threonine 54 is modified (phosphothreonine). Position 56 is a phosphoserine (serine 56). A helical membrane pass occupies residues 75-97 (MSVFNLSNAIMGSGILGLAFALA). Over 98 to 112 (NTGILLFLVLLTSVT) the chain is Extracellular. Residues 113 to 133 (LLSIYSINLLLICSKETGCMV) traverse the membrane as a helical segment. Residues 134–147 (YEKLGEQVFGTTGK) are Cytoplasmic-facing. The helical transmembrane segment at 148–168 (FVIFGATSLQNTGAMLSYLFI) threads the bilayer. At 169–188 (VKNELPSAIKFLMGKEETFS) the chain is on the extracellular side. The helical transmembrane segment at 189–211 (AWYVDGRVLVVIVTFGIILPLCL) threads the bilayer. Residues 212-216 (LKNLG) are Cytoplasmic-facing. A helical membrane pass occupies residues 217–237 (YLGYTSGFSLSCMVFFLIVVI). The Extracellular portion of the chain corresponds to 238–275 (YKKFQIPCIVPELNSTISANSTNADTCTPKYVTFNSKT). Residues cysteine 245 and cysteine 264 are joined by a disulfide bond. N-linked (GlcNAc...) asparagine glycosylation is found at asparagine 251 and asparagine 257. The helical transmembrane segment at 276–296 (VYALPTIAFAFVCHPSVLPIY) threads the bilayer. Residues 297–312 (SELKDRSQKKMQMVSN) lie on the Cytoplasmic side of the membrane. A helical transmembrane segment spans residues 313–333 (ISFFAMFVMYFLTAIFGYLTF). At 334–350 (YDNVQSDLLHKYQSKDD) the chain is on the extracellular side. Residues 351–371 (ILILTVRLAVIVAVILTVPVL) form a helical membrane-spanning segment. Over 372-393 (FFTVRSSLFELAKKTKFNLCRH) the chain is Cytoplasmic. A helical transmembrane segment spans residues 394–414 (TVVTCILLVVINLLVIFIPSM). The Extracellular portion of the chain corresponds to 415–416 (KD). Residues 417-437 (IFGVVGVTSANMLIFILPSSL) form a helical membrane-spanning segment. The Cytoplasmic portion of the chain corresponds to 438 to 452 (YLKITDQDGDKGTQR). A helical membrane pass occupies residues 453 to 473 (IWAALFLGLGVLFSLVSIPLV). Topologically, residues 474-487 (IYDWACSSSSDEGH) are extracellular.

It belongs to the amino acid/polyamine transporter 2 family. Post-translationally, N-glycosylation plays an important role in the L-glutamine transport. As to expression, expressed in the cerebral cortex by pyramidal and GABAergic neurons, astrocytes and other non-neuronal cells (at protein level). Expressed in placenta, heart, lung, skeletal muscle, spleen, stomach and testis. Highly expressed in cytotrophoblast cells from term placenta.

It is found in the cell membrane. It carries out the reaction L-glutamine(in) + Na(+)(in) = L-glutamine(out) + Na(+)(out). It catalyses the reaction L-alanine(in) + Na(+)(in) = L-alanine(out) + Na(+)(out). The catalysed reaction is L-asparagine(in) + Na(+)(in) = L-asparagine(out) + Na(+)(out). The enzyme catalyses L-histidine(in) + Na(+)(in) = L-histidine(out) + Na(+)(out). It carries out the reaction L-serine(in) + Na(+)(in) = L-serine(out) + Na(+)(out). It catalyses the reaction L-cysteine(in) + Na(+)(in) = L-cysteine(out) + Na(+)(out). The catalysed reaction is L-methionine(in) + Na(+)(in) = L-methionine(out) + Na(+)(out). The enzyme catalyses glycine(in) + Na(+)(in) = glycine(out) + Na(+)(out). It carries out the reaction L-threonine(in) + Na(+)(in) = L-threonine(out) + Na(+)(out). It catalyses the reaction L-proline(in) + Na(+)(in) = L-proline(out) + Na(+)(out). Inhibited by alpha-(methylamino)isobutyric acid (MeAIB). Inhibited by lithium, potassium, choline ions, N-methylglucamine. The pH dependence has an allosteric effect on the transport. Symporter that cotransports short-chain neutral amino acids and sodium ions from the extraccellular to the intracellular side of the cell membrane. The transport is elctrogenic, pH dependent and driven by the Na(+) electrochemical gradient. Participates in the astroglia-derived glutamine transport into GABAergic interneurons for neurotransmitter GABA de novo synthesis. May also contributes to amino acid transport in placental trophoblasts. Also regulates synaptic plasticity. The chain is Sodium-coupled neutral amino acid symporter 1 (SLC38A1) from Homo sapiens (Human).